Reading from the N-terminus, the 341-residue chain is Anthranilate phosphoribosyltransferase (341 aa).

Residues glycine 79, 82 to 83 (GD), threonine 87, 89 to 92 (NIST), 107 to 115 (KHGNRAVSS), and serine 119 each bind 5-phospho-alpha-D-ribose 1-diphosphate. Glycine 79 contributes to the anthranilate binding site. Serine 91 contributes to the Mg(2+) binding site. Asparagine 110 is an anthranilate binding site. Arginine 165 serves as a coordination point for anthranilate. Aspartate 224 and glutamate 225 together coordinate Mg(2+).

It belongs to the anthranilate phosphoribosyltransferase family. In terms of assembly, homodimer. Mg(2+) serves as cofactor.

The enzyme catalyses N-(5-phospho-beta-D-ribosyl)anthranilate + diphosphate = 5-phospho-alpha-D-ribose 1-diphosphate + anthranilate. Its pathway is amino-acid biosynthesis; L-tryptophan biosynthesis; L-tryptophan from chorismate: step 2/5. Functionally, catalyzes the transfer of the phosphoribosyl group of 5-phosphorylribose-1-pyrophosphate (PRPP) to anthranilate to yield N-(5'-phosphoribosyl)-anthranilate (PRA). The sequence is that of Anthranilate phosphoribosyltransferase from Bacillus thuringiensis subsp. konkukian (strain 97-27).